A 188-amino-acid polypeptide reads, in one-letter code: UPF0340 protein GK3370 (188 aa).

The protein belongs to the UPF0340 family.

This Geobacillus kaustophilus (strain HTA426) protein is UPF0340 protein GK3370.